The primary structure comprises 119 residues: Ribonuclease P protein component (119 aa).

This sequence belongs to the RnpA family. Consists of a catalytic RNA component (M1 or rnpB) and a protein subunit.

The catalysed reaction is Endonucleolytic cleavage of RNA, removing 5'-extranucleotides from tRNA precursor.. Its function is as follows. RNaseP catalyzes the removal of the 5'-leader sequence from pre-tRNA to produce the mature 5'-terminus. It can also cleave other RNA substrates such as 4.5S RNA. The protein component plays an auxiliary but essential role in vivo by binding to the 5'-leader sequence and broadening the substrate specificity of the ribozyme. In Borreliella burgdorferi (strain ZS7) (Borrelia burgdorferi), this protein is Ribonuclease P protein component.